Consider the following 200-residue polypeptide: MAMSQVVNTYPLSNYSFGTKEPKLEKDTSVADRLARMKINYMKEGMRTSVEGILLVQEHNHPHILLLQIGNTFCKLPGGRLKPGENEADGLKRKLTSKLGGNSAALVPDWTVGECVATWWRPNFETMMYPYCPPHITKPKECKRLYIVHLSEKEYFAVPKNLKLLAVPLFELYDNVQRYGPVISTIPQQLSRFHFNMISS.

The Nudix hydrolase domain occupies 45-172 (GMRTSVEGIL…KLLAVPLFEL (128 aa)). An interaction with RNA region spans residues 72–74 (TFC). Residues 79 to 100 (GRLKPGENEADGLKRKLTSKLG) carry the Nudix box motif.

Belongs to the Nudix hydrolase family. CPSF5 subfamily. In terms of assembly, homodimer. Component of the cleavage factor Im (CFIm) complex. Forms a complex with cleavage and polyadenylation specificity factor (CPSF) subunits FIPS5, PAPS4 and CPSF30.

It localises to the nucleus. In terms of biological role, component of the cleavage factor Im (CFIm) complex that plays a key role in pre-mRNA 3'-processing. Involved in association with CPSF6 or CPSF7 in pre-MRNA 3'-end poly(A) site cleavage and poly(A) addition. NUDT21/CPSF5 binds to cleavage and polyadenylation RNA substrates. The homodimer mediates simultaneous sequence-specific recognition of two 5'-UGUA-3' elements within the pre-mRNA. Binds to, but does not hydrolyze mono- and di-adenosine nucleotides. May have a role in mRNA export. The sequence is that of Pre-mRNA cleavage factor Im 25 kDa subunit 2 from Arabidopsis thaliana (Mouse-ear cress).